Consider the following 208-residue polypeptide: dITP/XTP pyrophosphatase (208 aa).

Position 11 to 16 (11 to 16 (SRNWKK)) interacts with substrate. Asp76 (proton acceptor) is an active-site residue. Asp76 is a binding site for Mg(2+). Substrate is bound by residues Ser77, 158 to 161 (FGYD), Lys184, and 189 to 190 (HR).

Belongs to the HAM1 NTPase family. Homodimer. It depends on Mg(2+) as a cofactor.

It catalyses the reaction XTP + H2O = XMP + diphosphate + H(+). The catalysed reaction is dITP + H2O = dIMP + diphosphate + H(+). It carries out the reaction ITP + H2O = IMP + diphosphate + H(+). Pyrophosphatase that catalyzes the hydrolysis of nucleoside triphosphates to their monophosphate derivatives, with a high preference for the non-canonical purine nucleotides XTP (xanthosine triphosphate), dITP (deoxyinosine triphosphate) and ITP. Seems to function as a house-cleaning enzyme that removes non-canonical purine nucleotides from the nucleotide pool, thus preventing their incorporation into DNA/RNA and avoiding chromosomal lesions. This is dITP/XTP pyrophosphatase from Mycobacterium leprae (strain TN).